The sequence spans 640 residues: Threonine--tRNA ligase (640 aa).

The TGS domain occupies 1-61; it reads MPVVTLPDGS…DKDSHLAIIT (61 aa). The catalytic stretch occupies residues 242 to 533; that stretch reads DHRRLGKQLD…LIENHAGNMP (292 aa). The Zn(2+) site is built by Cys333, His384, and His510.

This sequence belongs to the class-II aminoacyl-tRNA synthetase family. Homodimer. It depends on Zn(2+) as a cofactor.

The protein resides in the cytoplasm. It carries out the reaction tRNA(Thr) + L-threonine + ATP = L-threonyl-tRNA(Thr) + AMP + diphosphate + H(+). Its function is as follows. Catalyzes the attachment of threonine to tRNA(Thr) in a two-step reaction: L-threonine is first activated by ATP to form Thr-AMP and then transferred to the acceptor end of tRNA(Thr). Also edits incorrectly charged L-seryl-tRNA(Thr). The chain is Threonine--tRNA ligase from Polynucleobacter asymbioticus (strain DSM 18221 / CIP 109841 / QLW-P1DMWA-1) (Polynucleobacter necessarius subsp. asymbioticus).